Reading from the N-terminus, the 141-residue chain is NADH dehydrogenase [ubiquinone] 1 alpha subcomplex subunit 11 (141 aa).

Ala2 bears the N-acetylalanine mark. 2 consecutive transmembrane segments (helical) span residues 21 to 43 and 58 to 80; these read KAYS…RVTL and QYTF…SAHV.

The protein belongs to the complex I NDUFA11 subunit family. As to quaternary structure, complex I is composed of 45 different subunits.

Its subcellular location is the mitochondrion inner membrane. In terms of biological role, accessory subunit of the mitochondrial membrane respiratory chain NADH dehydrogenase (Complex I), that is believed not to be involved in catalysis. Complex I functions in the transfer of electrons from NADH to the respiratory chain. The immediate electron acceptor for the enzyme is believed to be ubiquinone. This chain is NADH dehydrogenase [ubiquinone] 1 alpha subcomplex subunit 11 (NDUFA11), found in Homo sapiens (Human).